The sequence spans 117 residues: Large ribosomal subunit protein bL20 (117 aa).

Belongs to the bacterial ribosomal protein bL20 family.

Its function is as follows. Binds directly to 23S ribosomal RNA and is necessary for the in vitro assembly process of the 50S ribosomal subunit. It is not involved in the protein synthesizing functions of that subunit. This Mannheimia succiniciproducens (strain KCTC 0769BP / MBEL55E) protein is Large ribosomal subunit protein bL20.